The following is a 102-amino-acid chain: Small ribosomal subunit protein uS10 (102 aa).

The protein belongs to the universal ribosomal protein uS10 family. As to quaternary structure, part of the 30S ribosomal subunit.

Its function is as follows. Involved in the binding of tRNA to the ribosomes. In Rhodopseudomonas palustris (strain BisB18), this protein is Small ribosomal subunit protein uS10.